We begin with the raw amino-acid sequence, 361 residues long: UDP-N-acetylglucosamine--N-acetylmuramyl-(pentapeptide) pyrophosphoryl-undecaprenol N-acetylglucosamine transferase (361 aa).

UDP-N-acetyl-alpha-D-glucosamine contacts are provided by residues 13-15 (TGG), Asn-125, Arg-167, Ser-196, Ile-251, 270-275 (ALTVTE), and Gln-296.

Belongs to the glycosyltransferase 28 family. MurG subfamily.

It is found in the cell inner membrane. The enzyme catalyses di-trans,octa-cis-undecaprenyl diphospho-N-acetyl-alpha-D-muramoyl-L-alanyl-D-glutamyl-meso-2,6-diaminopimeloyl-D-alanyl-D-alanine + UDP-N-acetyl-alpha-D-glucosamine = di-trans,octa-cis-undecaprenyl diphospho-[N-acetyl-alpha-D-glucosaminyl-(1-&gt;4)]-N-acetyl-alpha-D-muramoyl-L-alanyl-D-glutamyl-meso-2,6-diaminopimeloyl-D-alanyl-D-alanine + UDP + H(+). It participates in cell wall biogenesis; peptidoglycan biosynthesis. Its function is as follows. Cell wall formation. Catalyzes the transfer of a GlcNAc subunit on undecaprenyl-pyrophosphoryl-MurNAc-pentapeptide (lipid intermediate I) to form undecaprenyl-pyrophosphoryl-MurNAc-(pentapeptide)GlcNAc (lipid intermediate II). This is UDP-N-acetylglucosamine--N-acetylmuramyl-(pentapeptide) pyrophosphoryl-undecaprenol N-acetylglucosamine transferase from Psychrobacter cryohalolentis (strain ATCC BAA-1226 / DSM 17306 / VKM B-2378 / K5).